The sequence spans 252 residues: MMEDKITIEKLNLYYSDFHALHDINMHIQKNEITAFIGPSGCGKSTLLRSLNRMNDLVEGCRIDGSIKLDGTDIYNGDLDVTVLRQRVGMVFQRPNPFPMSVYDNVAYGPRIHGITDKKELDEIVETSLKQAAIWDDLKDRLKKSALGLSGGQQQRLCIARALAVKPEVLLMDEPTSALDPISTSKIEELALELKKNYTIVIVTHNMQQAVRISDKTGFFLLGDLVEFGETDQLFSMPKDERTEKYITGRFG.

The region spanning 6 to 247 is the ABC transporter domain; sequence ITIEKLNLYY…PKDERTEKYI (242 aa). Residue 38 to 45 participates in ATP binding; it reads GPSGCGKS.

This sequence belongs to the ABC transporter superfamily. Phosphate importer (TC 3.A.1.7) family. In terms of assembly, the complex is composed of two ATP-binding proteins (PstB), two transmembrane proteins (PstC and PstA) and a solute-binding protein (PstS).

The protein resides in the cell membrane. It carries out the reaction phosphate(out) + ATP + H2O = ADP + 2 phosphate(in) + H(+). Its function is as follows. Part of the ABC transporter complex PstSACB involved in phosphate import. Responsible for energy coupling to the transport system. The protein is Phosphate import ATP-binding protein PstB of Lactobacillus delbrueckii subsp. bulgaricus (strain ATCC 11842 / DSM 20081 / BCRC 10696 / JCM 1002 / NBRC 13953 / NCIMB 11778 / NCTC 12712 / WDCM 00102 / Lb 14).